Reading from the N-terminus, the 119-residue chain is Large ribosomal subunit protein uL18 (119 aa).

It belongs to the universal ribosomal protein uL18 family. Part of the 50S ribosomal subunit; part of the 5S rRNA/L5/L18/L25 subcomplex. Contacts the 5S and 23S rRNAs.

In terms of biological role, this is one of the proteins that bind and probably mediate the attachment of the 5S RNA into the large ribosomal subunit, where it forms part of the central protuberance. In Clostridium perfringens (strain 13 / Type A), this protein is Large ribosomal subunit protein uL18.